We begin with the raw amino-acid sequence, 63 residues long: Iota-crystallin (63 aa).

Belongs to the calycin superfamily. Fatty-acid binding protein (FABP) family.

Functionally, binds vitamin A2 in the eye lens and thus functions as a UV filter. Intracellular transport of retinol. The protein is Iota-crystallin (CRBPI) of Gonatodes vittatus (Wiegmann's striped gecko).